Reading from the N-terminus, the 115-residue chain is Phosphoribosyl-ATP pyrophosphatase (115 aa).

It belongs to the PRA-PH family.

Its subcellular location is the cytoplasm. The catalysed reaction is 1-(5-phospho-beta-D-ribosyl)-ATP + H2O = 1-(5-phospho-beta-D-ribosyl)-5'-AMP + diphosphate + H(+). It participates in amino-acid biosynthesis; L-histidine biosynthesis; L-histidine from 5-phospho-alpha-D-ribose 1-diphosphate: step 2/9. This is Phosphoribosyl-ATP pyrophosphatase from Saccharophagus degradans (strain 2-40 / ATCC 43961 / DSM 17024).